The sequence spans 574 residues: MTLKDIPFWRVLLIFQTARVYAGFGDPREAITMIHQQHGKPCDCAGGYVNAAPTVYLAAVSCSSHTAYQPSDSLKWRCVSNPTLANGENIGNCPCKTFKESVHSSCYTAYQECFFGNKTYYTAILASNRAPTIGTSNVPTVLGNTHNLLSAGCTGNVGQPICWNPKAPVHISDGGGPQDKAREIAVQKRLEEIHKSLFPELRYHPLALPKARGKEKIDAQTFNLLTATYSLLNKSNPNLANECWLCLPSGNPIPLAIPSNDSFLGSNLSCPIIPPLLVQPLEFMNLINASCFYSPFQNNSFDVDVGLVEFANCSTTLNISHSLCAPNSSVFVCGNNKAYTYLPSNWTGTCVLATLLPDIDIVPGDAPVPVPAIDHYLHRARRAVQFIPLLVGLGITTAVSTGTAGLGYSITQYTKLSRQLISDVQAISSTIQDLQDQVDSLAEVVLQNRRGLDLLTAEQGGICLALQEKCCFYANKSGIVRDKIKRLQEDLEKRRKEIIDNPFWTGLHGLLPYLLPLLGPLFCLLLLITFGPLIFNKIITFVKQQIDAIQAKPIQVHYHRLEQEDNGGVYLRVS.

The N-terminal stretch at 1 to 22 (MTLKDIPFWRVLLIFQTARVYA) is a signal peptide. The Extracellular portion of the chain corresponds to 23 to 514 (GFGDPREAIT…TGLHGLLPYL (492 aa)). N-linked (GlcNAc...) asparagine; by host glycosylation is found at Asn-117 and Asn-233. The short motif at 243-246 (CWLC) is the CXXC element. Disulfide bonds link Cys-243-Cys-246, Cys-243-Cys-471, and Cys-463-Cys-470. 8 N-linked (GlcNAc...) asparagine; by host glycosylation sites follow: Asn-260, Asn-267, Asn-288, Asn-298, Asn-312, Asn-318, Asn-327, and Asn-345. The segment at 386–406 (FIPLLVGLGITTAVSTGTAGL) is fusion peptide. Coiled coils occupy residues 407-457 (GYSI…LLTA) and 467-503 (QEKC…DNPF). The segment at 446-462 (LQNRRGLDLLTAEQGGI) is immunosuppression. Positions 463 to 471 (CLALQEKCC) match the CX6CC motif. Residue Asn-475 is glycosylated (N-linked (GlcNAc...) asparagine; by host). A helical membrane pass occupies residues 515 to 535 (LPLLGPLFCLLLLITFGPLIF). The Cytoplasmic portion of the chain corresponds to 536–574 (NKIITFVKQQIDAIQAKPIQVHYHRLEQEDNGGVYLRVS). Positions 558–561 (YHRL) match the YXXL motif; contains endocytosis signal motif.

In terms of assembly, the mature envelope protein (Env) consists of a trimer of SU-TM heterodimers attached by a labile interchain disulfide bond. Specific enzymatic cleavages in vivo yield mature proteins. Envelope glycoproteins are synthesized as an inactive precursor that is N-glycosylated and processed likely by host cell furin or by a furin-like protease in the Golgi to yield the mature SU and TM proteins. The cleavage site between SU and TM requires the minimal sequence [KR]-X-[KR]-R. The R-peptide is released from the C-terminus of the cytoplasmic tail of the TM protein upon particle formation as a result of proteolytic cleavage by the viral protease. Cleavage of this peptide is required for TM to become fusogenic. In terms of processing, the CXXC motif is highly conserved across a broad range of retroviral envelope proteins. It is thought to participate in the formation of a labile disulfide bond possibly with the CX6CC motif present in the transmembrane protein. Isomerization of the intersubunit disulfide bond to an SU intrachain disulfide bond is thought to occur upon receptor recognition in order to allow membrane fusion.

Its subcellular location is the virion membrane. The protein localises to the host cell membrane. The surface protein (SU) attaches the virus to the host cell by binding to its receptor. This interaction triggers the refolding of the transmembrane protein (TM) and is thought to activate its fusogenic potential by unmasking its fusion peptide. Fusion occurs at the host cell plasma membrane. Functionally, the transmembrane protein (TM) acts as a class I viral fusion protein. Under the current model, the protein has at least 3 conformational states: pre-fusion native state, pre-hairpin intermediate state, and post-fusion hairpin state. During viral and target cell membrane fusion, the coiled coil regions (heptad repeats) assume a trimer-of-hairpins structure, positioning the fusion peptide in close proximity to the C-terminal region of the ectodomain. The formation of this structure appears to drive apposition and subsequent fusion of viral and target cell membranes. Membranes fusion leads to delivery of the nucleocapsid into the cytoplasm. The protein is Envelope glycoprotein (env) of Macaca mulatta (Rhesus macaque).